A 155-amino-acid chain; its full sequence is Cyanate hydratase (155 aa).

Residues Arg95, Glu98, and Ser121 contribute to the active site.

It belongs to the cyanase family.

It catalyses the reaction cyanate + hydrogencarbonate + 3 H(+) = NH4(+) + 2 CO2. Catalyzes the reaction of cyanate with bicarbonate to produce ammonia and carbon dioxide. This Pseudomonas syringae pv. syringae (strain B728a) protein is Cyanate hydratase.